The primary structure comprises 352 residues: Phosphatase Herzog (352 aa).

The tract at residues 1–102 (MDATSIITQV…PLPDQQRYLL (102 aa)) is prion-like domain necessary for both protein assembly and membrane targeting. The interval 103-267 (PQVRLTDMHR…ELIPLFEKLS (165 aa)) is mediates substrate recognition. The FCP1 homology domain occupies 108 to 266 (TDMHRKCMVI…RELIPLFEKL (159 aa)). Disordered regions lie at residues 284–310 (NNQT…LQQQ) and 332–352 (TMLN…LQKT).

In terms of assembly, monomer. Forms higher-order protein aggregates with amyloid-like features during gastrulation. Interacts with babo, dah, Irk1, pch2, Ras64B, sax and Src64B.

The protein resides in the cell membrane. The catalysed reaction is O-phospho-L-seryl-[protein] + H2O = L-seryl-[protein] + phosphate. With respect to regulation, phosphatase activity requires amyloid-like aggregation on the membrane. Functionally, prion-like membrane-associated phosphatase. Phosphatase activity depends on amyloid-like assembly at the membrane. Might have a role in establishment of segment polarity in embryos. The protein is Phosphatase Herzog of Drosophila melanogaster (Fruit fly).